A 438-amino-acid polypeptide reads, in one-letter code: Terminase, large subunit (438 aa).

Residues 62–68 carry the Walker A motif motif; sequence SRRVGKS. Residues 150 to 155 carry the Walker B motif motif; the sequence is FIIFDE. The For ATPase activity role is filled by glutamate 155. Mg(2+) contacts are provided by aspartate 286, aspartate 342, and aspartate 418.

Belongs to the Tequatrovirus large terminase family. Interacts with the terminase small subunit; the active complex is probably heterooligomeric. Interacts with the portal protein. Mg(2+) is required as a cofactor.

Functionally, the terminase large subunit acts as an ATP driven molecular motor necessary for viral DNA translocation into empty capsids and as an endonuclease that cuts the viral genome to initiate and to end a packaging reaction The terminase lies at a unique vertex of the procapsid and is composed of two subunits, a small terminase subunit involved in viral DNA recognition (packaging sequence), and a large terminase subunit possessing endonucleolytic and ATPase activities. Both terminase subunits heterooligomerize and are docked on the portal protein to form the packaging machine. The terminase large subunit exhibits endonuclease activity and cleaves the viral genome concatemer. Direct long terminal repeats at each end of the genome are duplicated in concert with packaging. Once the capsid is packaged with the DNA, the terminase complex is substituted by the tail. This is Terminase, large subunit from Escherichia phage T5 (Enterobacteria phage T5).